Reading from the N-terminus, the 332-residue chain is Glycerol-3-phosphate dehydrogenase [NAD(P)+] (332 aa).

Residues tryptophan 15, arginine 35, and lysine 108 each contribute to the NADPH site. The sn-glycerol 3-phosphate site is built by lysine 108, glycine 137, and serine 139. Residue alanine 141 coordinates NADPH. Sn-glycerol 3-phosphate-binding residues include lysine 192, aspartate 245, serine 255, arginine 256, and asparagine 257. Lysine 192 serves as the catalytic Proton acceptor. An NADPH-binding site is contributed by arginine 256. NADPH is bound by residues leucine 278 and glutamate 280.

This sequence belongs to the NAD-dependent glycerol-3-phosphate dehydrogenase family.

Its subcellular location is the cytoplasm. It carries out the reaction sn-glycerol 3-phosphate + NAD(+) = dihydroxyacetone phosphate + NADH + H(+). The catalysed reaction is sn-glycerol 3-phosphate + NADP(+) = dihydroxyacetone phosphate + NADPH + H(+). The protein operates within membrane lipid metabolism; glycerophospholipid metabolism. Catalyzes the reduction of the glycolytic intermediate dihydroxyacetone phosphate (DHAP) to sn-glycerol 3-phosphate (G3P), the key precursor for phospholipid synthesis. This Methylobacterium radiotolerans (strain ATCC 27329 / DSM 1819 / JCM 2831 / NBRC 15690 / NCIMB 10815 / 0-1) protein is Glycerol-3-phosphate dehydrogenase [NAD(P)+].